A 1293-amino-acid chain; its full sequence is MLDVNFFDELRIGLATAEDIRTWSHGEVKKPETINYRTLKPEKDGLFCEKIFGPTRDWECYCGKYKRVRFKGIICERCGVEVTRAKVRRERMGHIELAAPVTHIWYFKGVPSRLGYLLDLAPKDLEKVIYFAAYMITSVDDEARQRDFSSLEAQIEVEKREVENRRDSDVETRAKTLEQDLAELEAEGAKSDVRRKVRESAEREMAQIRRRADAEIDRLATIWDRFRTLKVQDLEGDEVLYRAMRERFGLYFEGGMGAAALQKRLQSFDLEAEAESLRETIATGKGQRKTRALKRLKVVSAFLTTRNSPEGMVLDCVPVIPPDLRPMVQLDGGRFATSDLNDLYRRVINRNNRLKRLLDLGAPEIIVNNEKRMLQEAVDALFDNGRRGRPVTGPGNRPLKSLSDMLKGKQGRFRQNLLGKRVDYSGRSVIVVGPQLKLHQCGLPKQMALELFKPFVMKRLVDLSHAQNIKSAKRMVERARPVVWDVLSEVITEHPVLLNRAPTLHRLGIQAFEPQLVEGKAIQIHPLVCTAFNADFDGDQMAVHVPLSAEAQAEARILMLSSNNILKPADGRPVTMPTQDMIIGLYHLTADRDDVAGEGRQFSSLAEAIMAFDAKQLNLNAKVRIRLSGVVPTSAMALPEDWQQGDDLDVETTLGRALFNETLPVDYEYVNVVVDKKQLSAIVNDLAERYPKVQVAATLDALKEAGFHWATRSGTTVSIADVVTPPNKQAILETYEAKAEKVQQQYERGLITDDERRQELIEIWTQATNDVAKDLEAAMPTHNTIHRMVSSGARGNWMQMRQLAGMRGLMANPKGEIIPRPVKASFREGLTVGEFFITTHGARKGLADTALRTADSGYLTRRLVDVSQDVIVREDDCGTFRGLSMPIAEKNSDGSLRRHDDVETSVYARTLATDVVVDGEVVLPAGSDLGDVVIDALVERGVESLKVRSVLTCESRVGTCARCYGRSLASGKLVDIGEAVGIVAAQSIGEPGTQLTMRTFHTGGAASESGDITHGLPRVVELFEARTPKGNAPISEVAGRTRIEETDKGRKIVVTPDDGAEEVEYPVTRRQRLLVEDGTHVEVGQKLVQGAVDPKQVLRILGPRRVQMHLVDEVQEVYRSQGVSIHDKHIEVIVRQMLKRVTIIEQNGSELLPGELVERARFEEENRRVMAEGGQPSSGRPELMGITKASLATDSWLSAASFQETTRVLTNAAMEGKSDPLLGLKENVIIGKLIPAGTGLPRYRNVRVEPTEEAKAQMYSVPGYDDVDYAQFGVGSGQAVPLEEFDYGSSDYR.

4 residues coordinate Zn(2+): cysteine 60, cysteine 62, cysteine 75, and cysteine 78. Residues aspartate 535, aspartate 537, and aspartate 539 each coordinate Mg(2+). Residues cysteine 877, cysteine 953, cysteine 960, and cysteine 963 each contribute to the Zn(2+) site.

It belongs to the RNA polymerase beta' chain family. In terms of assembly, the RNAP catalytic core consists of 2 alpha, 1 beta, 1 beta' and 1 omega subunit. When a sigma factor is associated with the core the holoenzyme is formed, which can initiate transcription. It depends on Mg(2+) as a cofactor. Zn(2+) is required as a cofactor.

It carries out the reaction RNA(n) + a ribonucleoside 5'-triphosphate = RNA(n+1) + diphosphate. Its function is as follows. DNA-dependent RNA polymerase catalyzes the transcription of DNA into RNA using the four ribonucleoside triphosphates as substrates. The sequence is that of DNA-directed RNA polymerase subunit beta' from Kineococcus radiotolerans (strain ATCC BAA-149 / DSM 14245 / SRS30216).